We begin with the raw amino-acid sequence, 275 residues long: Large ribosomal subunit protein uL2 (275 aa).

The interval 223 to 275 (VAMNPVDHPHGGGEGRTSGGRHPVTPWGVPTKGYKTRSNKRTDKYIVRRRNKK) is disordered.

It belongs to the universal ribosomal protein uL2 family. As to quaternary structure, part of the 50S ribosomal subunit. Forms a bridge to the 30S subunit in the 70S ribosome.

Functionally, one of the primary rRNA binding proteins. Required for association of the 30S and 50S subunits to form the 70S ribosome, for tRNA binding and peptide bond formation. It has been suggested to have peptidyltransferase activity; this is somewhat controversial. Makes several contacts with the 16S rRNA in the 70S ribosome. This chain is Large ribosomal subunit protein uL2, found in Shewanella loihica (strain ATCC BAA-1088 / PV-4).